The primary structure comprises 395 residues: Lipoyl synthase, mitochondrial (395 aa).

The N-terminal 14 residues, methionine 1–glutamine 14, are a transit peptide targeting the mitochondrion. [4Fe-4S] cluster is bound by residues cysteine 112, cysteine 117, cysteine 123, cysteine 142, cysteine 146, cysteine 149, and serine 357. The 220-residue stretch at lysine 127 to leucine 346 folds into the Radical SAM core domain.

This sequence belongs to the radical SAM superfamily. Lipoyl synthase family. It depends on [4Fe-4S] cluster as a cofactor.

The protein resides in the mitochondrion. The catalysed reaction is [[Fe-S] cluster scaffold protein carrying a second [4Fe-4S](2+) cluster] + N(6)-octanoyl-L-lysyl-[protein] + 2 oxidized [2Fe-2S]-[ferredoxin] + 2 S-adenosyl-L-methionine + 4 H(+) = [[Fe-S] cluster scaffold protein] + N(6)-[(R)-dihydrolipoyl]-L-lysyl-[protein] + 4 Fe(3+) + 2 hydrogen sulfide + 2 5'-deoxyadenosine + 2 L-methionine + 2 reduced [2Fe-2S]-[ferredoxin]. It participates in protein modification; protein lipoylation via endogenous pathway; protein N(6)-(lipoyl)lysine from octanoyl-[acyl-carrier-protein]: step 2/2. Catalyzes the radical-mediated insertion of two sulfur atoms into the C-6 and C-8 positions of the octanoyl moiety bound to the lipoyl domains of lipoate-dependent enzymes, thereby converting the octanoylated domains into lipoylated derivatives. This Debaryomyces hansenii (strain ATCC 36239 / CBS 767 / BCRC 21394 / JCM 1990 / NBRC 0083 / IGC 2968) (Yeast) protein is Lipoyl synthase, mitochondrial.